Reading from the N-terminus, the 199-residue chain is Secreted chorismate mutase (199 aa).

The first 33 residues, 1 to 33, serve as a signal peptide directing secretion; it reads MLTRPREIYLATAVSIGILLSLIAPLGPPLARA. In terms of domain architecture, Chorismate mutase spans 34-113; that stretch reads DGTSQLAELV…ATEAIEYSRF (80 aa). Residues R49, K60, D69, 72–76, 105–109, and R134 contribute to the substrate site; these read RVEQQ and TEAIE. C160 and C193 form a disulfide bridge.

Homodimer.

It localises to the secreted. The enzyme catalyses chorismate = prephenate. It participates in metabolic intermediate biosynthesis; prephenate biosynthesis; prephenate from chorismate: step 1/1. Tyrosine, phenylalanine, and tryptophan moderately enhance chorismate mutase activity at low concentrations, but allosterically inhibit the enzyme at higher concentrations. In terms of biological role, catalyzes the Claisen rearrangement of chorismate to prephenate. May play some role in the pathogenicity. In Mycobacterium tuberculosis (strain ATCC 25618 / H37Rv), this protein is Secreted chorismate mutase.